Reading from the N-terminus, the 873-residue chain is Alanine--tRNA ligase (873 aa).

Histidine 559, histidine 563, cysteine 661, and histidine 665 together coordinate Zn(2+).

This sequence belongs to the class-II aminoacyl-tRNA synthetase family. Requires Zn(2+) as cofactor.

Its subcellular location is the cytoplasm. The enzyme catalyses tRNA(Ala) + L-alanine + ATP = L-alanyl-tRNA(Ala) + AMP + diphosphate. Functionally, catalyzes the attachment of alanine to tRNA(Ala) in a two-step reaction: alanine is first activated by ATP to form Ala-AMP and then transferred to the acceptor end of tRNA(Ala). Also edits incorrectly charged Ser-tRNA(Ala) and Gly-tRNA(Ala) via its editing domain. The chain is Alanine--tRNA ligase from Acaryochloris marina (strain MBIC 11017).